Reading from the N-terminus, the 334-residue chain is Trans-1,2-dihydrobenzene-1,2-diol dehydrogenase (334 aa).

It belongs to the Gfo/Idh/MocA family. As to quaternary structure, homodimer. Small intestine.

It catalyses the reaction (1R,2R)-1,2-dihydrobenzene-1,2-diol + NADP(+) = catechol + NADPH + H(+). It carries out the reaction D-xylose + NADP(+) = D-xylono-1,5-lactone + NADPH + H(+). This Homo sapiens (Human) protein is Trans-1,2-dihydrobenzene-1,2-diol dehydrogenase (DHDH).